Reading from the N-terminus, the 58-residue chain is MAVPKKKTSKSKRNQRHAVWKAKAATAAQRALSIGKSVLSGRAQGFVYPVAEADDSES.

It belongs to the bacterial ribosomal protein bL32 family.

The protein is Large ribosomal subunit protein bL32 of Synechococcus sp. (strain WH7803).